The sequence spans 706 residues: Putative pentatricopeptide repeat-containing protein At3g47840 (706 aa).

16 PPR repeats span residues 39–69, 70–104, 107–141, 142–172, 173–203, 208–242, 243–273, 274–308, 309–343, 344–374, 375–409, 410–444, 445–475, 476–510, 511–541, and 547–577; these read VKFD…MPHG, DIVS…DHAV, DTSV…SLLS, SVYV…MPFR, NAVT…MSRS, DTYT…GFVT, TLCV…MSER, DVVS…QVPP, NEQT…GLND, SLSV…MRCR, DIIS…GTKP, TDFA…GLEQ, NSTV…TDRD, DIVS…GFRP, DSVT…MQET, and AKEH…MSWK. The tract at residues 582–657 is type E motif; sequence VWTTLLIACK…EPGWSSIKIK (76 aa). Residues 658–688 are type E(+) motif; sequence DCVSAFVSGDRFHPQSEDIYNILELAVSGAE.

Belongs to the PPR family. PCMP-E subfamily.

The polypeptide is Putative pentatricopeptide repeat-containing protein At3g47840 (PCMP-E43) (Arabidopsis thaliana (Mouse-ear cress)).